The chain runs to 202 residues: MGTPSDRTTTLSLCLAVCVVVIAVGTGWASEAGEGAHQVDSAAQMKDFGWRVLNFAVLAALLGWAIAKAQVKKALNERQVKIERSLREAEQSRDAAEQKLREYSGKLEHASREIEEMRGAMLRESEQEKQRIIAEARAAAEKIAGQATLSAEHEVLKARSALQAEAGRLAVQLAATKLAGAIGKEDHDLYVDDYLKKVEQFK.

A helical transmembrane segment spans residues 9–29 (TTLSLCLAVCVVVIAVGTGWA).

The protein belongs to the ATPase B chain family. As to quaternary structure, F-type ATPases have 2 components, F(1) - the catalytic core - and F(0) - the membrane proton channel. F(1) has five subunits: alpha(3), beta(3), gamma(1), delta(1), epsilon(1). F(0) has three main subunits: a(1), b(2) and c(10-14). The alpha and beta chains form an alternating ring which encloses part of the gamma chain. F(1) is attached to F(0) by a central stalk formed by the gamma and epsilon chains, while a peripheral stalk is formed by the delta and b chains.

It is found in the cell inner membrane. F(1)F(0) ATP synthase produces ATP from ADP in the presence of a proton or sodium gradient. F-type ATPases consist of two structural domains, F(1) containing the extramembraneous catalytic core and F(0) containing the membrane proton channel, linked together by a central stalk and a peripheral stalk. During catalysis, ATP synthesis in the catalytic domain of F(1) is coupled via a rotary mechanism of the central stalk subunits to proton translocation. Functionally, component of the F(0) channel, it forms part of the peripheral stalk, linking F(1) to F(0). The sequence is that of ATP synthase subunit b from Pelobacter propionicus (strain DSM 2379 / NBRC 103807 / OttBd1).